The following is a 1150-amino-acid chain: Alpha-mannosidase 2 (1150 aa).

At 1–5 (MKLSR) the chain is on the cytoplasmic side. A helical; Signal-anchor for type II membrane protein transmembrane segment spans residues 6-26 (QFTVFGSAIFCVVIFSLYLML). Residues 27-1150 (DRGHLDYPRG…STFRIRLRWT (1124 aa)) are Lumenal-facing. A glycan (N-linked (GlcNAc...) asparagine) is linked at Asn78. Phosphoserine occurs at positions 80 and 82. Asn93 is a glycosylation site (N-linked (GlcNAc...) asparagine). Zn(2+) contacts are provided by His174, Asp176, Asp288, and His568. Catalysis depends on Asp288, which acts as the Nucleophile. An N-linked (GlcNAc...) asparagine glycan is attached at Asn1129.

The protein belongs to the glycosyl hydrolase 38 family. In terms of assembly, homodimer; disulfide-linked. It depends on Zn(2+) as a cofactor. Glycosylated. As to expression, all tissues, mostly in adrenal and thymus.

It is found in the golgi apparatus membrane. The enzyme catalyses N(4)-{beta-D-GlcNAc-(1-&gt;2)-alpha-D-Man-(1-&gt;3)-[alpha-D-Man-(1-&gt;3)-[alpha-D-Man-(1-&gt;6)]-alpha-D-Man-(1-&gt;6)]-beta-D-Man-(1-&gt;4)-beta-D-GlcNAc-(1-&gt;4)-beta-D-GlcNAc}-L-asparaginyl-[protein] + 2 H2O = 2 alpha-D-mannopyranose + an N(4)-{beta-D-GlcNAc-(1-&gt;2)-alpha-D-Man-(1-&gt;3)-[alpha-D-Man-(1-&gt;6)]-beta-D-Man-(1-&gt;4)-beta-D-GlcNAc-(1-&gt;4)-beta-D-GlcNAc}-L-asparaginyl-[protein]. The protein operates within protein modification; protein glycosylation. Its function is as follows. Catalyzes the first committed step in the biosynthesis of complex N-glycans. It controls conversion of high mannose to complex N-glycans; the final hydrolytic step in the N-glycan maturation pathway. The chain is Alpha-mannosidase 2 (Man2a1) from Mus musculus (Mouse).